Consider the following 125-residue polypeptide: uncharacterized protein (125 aa).

This is an uncharacterized protein from Dictyostelium discoideum (Social amoeba).